Reading from the N-terminus, the 1377-residue chain is DNA-directed RNA polymerase subunit beta' (1377 aa).

Zn(2+)-binding residues include Cys60, Cys62, Cys75, and Cys78. Mg(2+)-binding residues include Asp449, Asp451, and Asp453. The Zn(2+) site is built by Cys777, Cys851, Cys858, and Cys861.

Belongs to the RNA polymerase beta' chain family. The RNAP catalytic core consists of 2 alpha, 1 beta, 1 beta' and 1 omega subunit. When a sigma factor is associated with the core the holoenzyme is formed, which can initiate transcription. Mg(2+) serves as cofactor. The cofactor is Zn(2+).

It catalyses the reaction RNA(n) + a ribonucleoside 5'-triphosphate = RNA(n+1) + diphosphate. Functionally, DNA-dependent RNA polymerase catalyzes the transcription of DNA into RNA using the four ribonucleoside triphosphates as substrates. This Borrelia recurrentis (strain A1) protein is DNA-directed RNA polymerase subunit beta'.